The primary structure comprises 391 residues: MENQAHIAGEKKGIMEKIKEKLPGGHGDHKETAGTHGHPGTATHGAPATGGAYGQQGHAGTTGTGLHGAHAGEKKGVMENIKDKLPGGHQDHQQTGGTYGQQGHTGTATHGTPATGGTYGQQGHTGTATHGTPATGGTYGEQGHTGVTGTGTHGTGEKKGVMENIKEKLPGGHGDHQQTGGTYGQQGHTGTATHGTPAGGGTYEQHGHTGMTGTGTHGTGEKKGVMENIKDKLPGGHGDHQQTGGTYGQQGHTGTATQGTPAGGGTYEQHGHTGMTGAGTHSTGEKKGVMENIKEKLPGGHSDHQQTGGAYGQQGHTGTATHGTPAGGGTYGQHGHAGVIGTETHGTTATGGTHGQHGHTGTTGTGTHGSDGIGEKKSLMDKIKDKLPGQH.

17 consecutive repeat copies span residues 9–31 (GEKKGIMEKIKEKLPGGHGDHKE), 49–62 (TGGAYGQQGHAGTT), 72–94 (GEKKGVMENIKDKLPGGHQDHQQ), 95–108 (TGGTYGQQGHTGTA), 115–128 (TGGTYGQQGHTGTA), 135–148 (TGGTYGEQGHTGVT), 156–178 (GEKKGVMENIKEKLPGGHGDHQQ), 179–192 (TGGTYGQQGHTGTA), 199–212 (GGGTYEQHGHTGMT), 220–242 (GEKKGVMENIKDKLPGGHGDHQQ), 243–256 (TGGTYGQQGHTGTA), 263–276 (GGGTYEQHGHTGMT), 284–306 (GEKKGVMENIKEKLPGGHSDHQQ), 307–320 (TGGAYGQQGHTGTA), 327–340 (GGGTYGQHGHAGVI), 350–363 (TGGTHGQHGHTGTT), and 374–391 (GEKKSLMDKIKDKLPGQH). Residues 9–391 (GEKKGIMEKI…KIKDKLPGQH (383 aa)) are 6 X 23 AA approximate repeats. The span at 21-33 (KLPGGHGDHKETA) shows a compositional bias: basic and acidic residues. The segment at 21-391 (KLPGGHGDHK…KIKDKLPGQH (371 aa)) is disordered. Positions 34 to 59 (GTHGHPGTATHGAPATGGAYGQQGHA) are enriched in low complexity. Residues 49–363 (TGGAYGQQGH…HGQHGHTGTT (315 aa)) form an 11 X 14 AA approximate repeats region. The segment covering 70 to 92 (HAGEKKGVMENIKDKLPGGHQDH) has biased composition (basic and acidic residues). Positions 93–145 (QQTGGTYGQQGHTGTATHGTPATGGTYGQQGHTGTATHGTPATGGTYGEQGHT) are enriched in low complexity. The span at 155–176 (TGEKKGVMENIKEKLPGGHGDH) shows a compositional bias: basic and acidic residues. A compositionally biased stretch (low complexity) spans 177–196 (QQTGGTYGQQGHTGTATHGT). A compositionally biased stretch (basic and acidic residues) spans 219 to 240 (TGEKKGVMENIKDKLPGGHGDH). Composition is skewed to low complexity over residues 241–260 (QQTGGTYGQQGHTGTATQGT) and 272–282 (HTGMTGAGTHS). The segment covering 283-304 (TGEKKGVMENIKEKLPGGHSDH) has biased composition (basic and acidic residues). Composition is skewed to low complexity over residues 305 to 324 (QQTGGAYGQQGHTGTATHGT) and 333 to 351 (QHGHAGVIGTETHGTTATG). Gly residues predominate over residues 361-372 (GTTGTGTHGSDG). Positions 373–391 (IGEKKSLMDKIKDKLPGQH) are enriched in basic and acidic residues.

Belongs to the plant dehydrin family.

May reduce intracellular freezing damage during winter by hydrogen-bonding to the lattice of the nascent ice crystals, thus modifying the structure and/or propagation of ice crystals. The polypeptide is Cold-shock protein CS120 (CS120) (Triticum aestivum (Wheat)).